The following is a 367-amino-acid chain: Zinc metalloproteinase nas-22 (367 aa).

The N-terminal stretch at 1 to 16 (MKSFFILLSILQECYG) is a signal peptide. Residues 41–237 (VLIRGSDEER…LMINKYYECS (197 aa)) form the Peptidase M12A domain. N-linked (GlcNAc...) asparagine glycans are attached at residues N56 and N85. Cystine bridges form between C88–C236, C111–C130, C238–C258, and C260–C269. H138 contributes to the Zn(2+) binding site. E139 is an active-site residue. 2 residues coordinate Zn(2+): H142 and H148. N-linked (GlcNAc...) asparagine glycosylation is found at N169, N241, and N254. The region spanning 232–270 (KYYECSCANNLSCKNHGYPNPSNCSQCNCPYGFGGADCS) is the EGF-like domain. Residues N287 and N322 are each glycosylated (N-linked (GlcNAc...) asparagine).

Zn(2+) serves as cofactor. As to expression, expressed in uterine seam (utse) cell.

Its subcellular location is the secreted. Metalloprotease. The protein is Zinc metalloproteinase nas-22 (nas-22) of Caenorhabditis elegans.